A 321-amino-acid polypeptide reads, in one-letter code: Nodulation protein D 1 (321 aa).

In terms of domain architecture, HTH lysR-type spans 6 to 63 (LDLNLLVALDALMTERKLTAAARSINLSQPAMSAAITRLRTYFRDELFTMNGRELVPT). A DNA-binding region (H-T-H motif) is located at residues 23 to 42 (LTAAARSINLSQPAMSAAIT).

It belongs to the LysR transcriptional regulatory family.

In terms of biological role, nodD regulates the expression of the nodABCFE genes which encode other nodulation proteins. NodD is also a negative regulator of its own expression. Binds flavonoids as inducers. The protein is Nodulation protein D 1 (nodD1) of Bradyrhizobium japonicum.